A 340-amino-acid polypeptide reads, in one-letter code: Glycerol-3-phosphate dehydrogenase [NAD(P)+] (340 aa).

4 residues coordinate NADPH: serine 14, phenylalanine 15, arginine 35, and lysine 108. Lysine 108 and glycine 136 together coordinate sn-glycerol 3-phosphate. Alanine 140 is an NADPH binding site. Sn-glycerol 3-phosphate-binding residues include lysine 191, aspartate 244, serine 254, arginine 255, and asparagine 256. The Proton acceptor role is filled by lysine 191. Position 255 (arginine 255) interacts with NADPH. Glutamate 281 provides a ligand contact to NADPH.

This sequence belongs to the NAD-dependent glycerol-3-phosphate dehydrogenase family.

The protein localises to the cytoplasm. It catalyses the reaction sn-glycerol 3-phosphate + NAD(+) = dihydroxyacetone phosphate + NADH + H(+). The enzyme catalyses sn-glycerol 3-phosphate + NADP(+) = dihydroxyacetone phosphate + NADPH + H(+). Its pathway is membrane lipid metabolism; glycerophospholipid metabolism. Its function is as follows. Catalyzes the reduction of the glycolytic intermediate dihydroxyacetone phosphate (DHAP) to sn-glycerol 3-phosphate (G3P), the key precursor for phospholipid synthesis. The chain is Glycerol-3-phosphate dehydrogenase [NAD(P)+] from Pseudomonas aeruginosa (strain LESB58).